Consider the following 692-residue polypeptide: Elongation factor G (692 aa).

One can recognise a tr-type G domain in the interval glutamate 8–threonine 282. Residues alanine 17–threonine 24, aspartate 81–histidine 85, and asparagine 135–aspartate 138 each bind GTP. 4 positions are modified to phosphoserine: serine 213, serine 302, serine 569, and serine 680.

It belongs to the TRAFAC class translation factor GTPase superfamily. Classic translation factor GTPase family. EF-G/EF-2 subfamily. In terms of processing, phosphorylated on threonine residue(s). Phosphorylated by PrkC and dephosphorylated by PrpC, in vitro.

It localises to the cytoplasm. Catalyzes the GTP-dependent ribosomal translocation step during translation elongation. During this step, the ribosome changes from the pre-translocational (PRE) to the post-translocational (POST) state as the newly formed A-site-bound peptidyl-tRNA and P-site-bound deacylated tRNA move to the P and E sites, respectively. Catalyzes the coordinated movement of the two tRNA molecules, the mRNA and conformational changes in the ribosome. The polypeptide is Elongation factor G (fusA) (Bacillus subtilis (strain 168)).